The chain runs to 202 residues: Small ribosomal subunit protein uS4c (202 aa).

In terms of domain architecture, S4 RNA-binding spans 90–158 (MRSDNVIFRL…ISKNIELYQK (69 aa)).

The protein belongs to the universal ribosomal protein uS4 family. As to quaternary structure, part of the 30S ribosomal subunit. Contacts protein S5. The interaction surface between S4 and S5 is involved in control of translational fidelity.

It localises to the plastid. The protein resides in the chloroplast. Its function is as follows. One of the primary rRNA binding proteins, it binds directly to 16S rRNA where it nucleates assembly of the body of the 30S subunit. With S5 and S12 plays an important role in translational accuracy. The polypeptide is Small ribosomal subunit protein uS4c (rps4) (Exsertotheca crispa (Moss)).